The chain runs to 353 residues: Inositol-tetrakisphosphate 1-kinase 3 (353 aa).

The segment at 1 to 25 (MKLTDNEEITMNGTREMETTEQETS) is disordered. 2 residues coordinate 1D-myo-inositol 1,3,4-trisphosphate: K50 and K92. ATP-binding residues include R127 and K177. Residues 138–350 (NLSDSNGRVG…QSQCKKRALA (213 aa)) enclose the ATP-grasp domain. Positions 188 and 220 each coordinate 1D-myo-inositol 1,3,4-trisphosphate. Residues 209-220 (QEFVNHGGVLFK) and S235 contribute to the ATP site. Residues D300, D315, and N317 each contribute to the Mg(2+) site. N317 contacts 1D-myo-inositol 1,3,4-trisphosphate.

This sequence belongs to the ITPK1 family. In terms of assembly, monomer. Mg(2+) serves as cofactor. Highly expressed in leaves and flowers, and at lower levels in roots, stems, cauline leaves and siliques.

It catalyses the reaction 1D-myo-inositol 3,4,5,6-tetrakisphosphate + ATP = 1D-myo-inositol 1,3,4,5,6-pentakisphosphate + ADP + H(+). The catalysed reaction is 1D-myo-inositol 1,3,4-trisphosphate + ATP = 1D-myo-inositol 1,3,4,5-tetrakisphosphate + ADP + H(+). The enzyme catalyses 1D-myo-inositol 1,3,4-trisphosphate + ATP = 1D-myo-inositol 1,3,4,6-tetrakisphosphate + ADP + H(+). Kinase that can phosphorylate various inositol polyphosphate such as Ins(3,4,5,6)P4 or Ins(1,3,4)P3. Phosphorylates Ins(3,4,5,6)P4 to form InsP5. This reaction is thought to have regulatory importance, since Ins(3,4,5,6)P4 is an inhibitor of plasma membrane Ca(2+)-activated Cl(-) channels, while Ins(1,3,4,5,6)P5 is not. Also phosphorylates Ins(1,3,4)P3 or a racemic mixture of Ins(1,4,6)P3 and Ins(3,4,6)P3 to form InsP4. Ins(1,3,4,6)P4 is an essential molecule in the hexakisphosphate (InsP6) pathway. The chain is Inositol-tetrakisphosphate 1-kinase 3 (ITPK3) from Arabidopsis thaliana (Mouse-ear cress).